A 349-amino-acid chain; its full sequence is Isopentenyl-diphosphate delta-isomerase (349 aa).

9–10 provides a ligand contact to substrate; sequence RK. Residues 65 to 67, Ser-95, and Asn-124 each bind FMN; that span reads AMT. 95-97 serves as a coordination point for substrate; the sequence is STH. Residue Gln-154 coordinates substrate. Residue Glu-155 coordinates Mg(2+). Residues Lys-186, Ser-211, Thr-216, 262–264, and 283–284 each bind FMN; these read GLR and SR.

Belongs to the IPP isomerase type 2 family. In terms of assembly, homooctamer. Dimer of tetramers. Requires FMN as cofactor. NADPH is required as a cofactor. Mg(2+) serves as cofactor.

It is found in the cytoplasm. The enzyme catalyses isopentenyl diphosphate = dimethylallyl diphosphate. Its function is as follows. Involved in the biosynthesis of isoprenoids. Catalyzes the 1,3-allylic rearrangement of the homoallylic substrate isopentenyl (IPP) to its allylic isomer, dimethylallyl diphosphate (DMAPP). The polypeptide is Isopentenyl-diphosphate delta-isomerase (Staphylococcus aureus (strain JH1)).